Here is a 341-residue protein sequence, read N- to C-terminus: Methionine import ATP-binding protein MetN 2 (341 aa).

An ABC transporter domain is found at 2–241; the sequence is IEASELTKVY…PKAPLTQEFI (240 aa). 38-45 serves as a coordination point for ATP; sequence GYSGAGKS.

This sequence belongs to the ABC transporter superfamily. Methionine importer (TC 3.A.1.24) family. In terms of assembly, the complex is composed of two ATP-binding proteins (MetN), two transmembrane proteins (MetI) and a solute-binding protein (MetQ).

The protein resides in the cell membrane. It catalyses the reaction L-methionine(out) + ATP + H2O = L-methionine(in) + ADP + phosphate + H(+). The enzyme catalyses D-methionine(out) + ATP + H2O = D-methionine(in) + ADP + phosphate + H(+). In terms of biological role, part of the ABC transporter complex MetNIQ involved in methionine import. Responsible for energy coupling to the transport system. The sequence is that of Methionine import ATP-binding protein MetN 2 from Shouchella clausii (strain KSM-K16) (Alkalihalobacillus clausii).